The sequence spans 279 residues: Acetyl-coenzyme A carboxylase carboxyl transferase subunit beta (279 aa).

Residues 23 to 279 form the CoA carboxyltransferase N-terminal domain; it reads LWWKCEECGA…LVTLFSMLKV (257 aa). Cysteine 27, cysteine 30, cysteine 46, and cysteine 49 together coordinate Zn(2+). A C4-type zinc finger spans residues 27 to 49; that stretch reads CEECGAMLHKKQFEDHFFTCAEC.

This sequence belongs to the AccD/PCCB family. As to quaternary structure, acetyl-CoA carboxylase is a heterohexamer composed of biotin carboxyl carrier protein (AccB), biotin carboxylase (AccC) and two subunits each of ACCase subunit alpha (AccA) and ACCase subunit beta (AccD). Zn(2+) serves as cofactor.

It is found in the cytoplasm. It catalyses the reaction N(6)-carboxybiotinyl-L-lysyl-[protein] + acetyl-CoA = N(6)-biotinyl-L-lysyl-[protein] + malonyl-CoA. The protein operates within lipid metabolism; malonyl-CoA biosynthesis; malonyl-CoA from acetyl-CoA: step 1/1. Its function is as follows. Component of the acetyl coenzyme A carboxylase (ACC) complex. Biotin carboxylase (BC) catalyzes the carboxylation of biotin on its carrier protein (BCCP) and then the CO(2) group is transferred by the transcarboxylase to acetyl-CoA to form malonyl-CoA. The chain is Acetyl-coenzyme A carboxylase carboxyl transferase subunit beta from Pelodictyon phaeoclathratiforme (strain DSM 5477 / BU-1).